The following is a 339-amino-acid chain: Ketol-acid reductoisomerase (NADP(+)) (339 aa).

The region spanning 1–182 (MRVYYDRDAD…GGGRSGIIET (182 aa)) is the KARI N-terminal Rossmann domain. NADP(+)-binding positions include 24–27 (YGSQ), K48, S51, T53, and 83–86 (DELQ). The active site involves H108. G134 provides a ligand contact to NADP(+). In terms of domain architecture, KARI C-terminal knotted spans 183–328 (NFREECETDL…AKLRGMMPWI (146 aa)). Mg(2+) contacts are provided by D191, E195, E227, and E231. S252 contacts substrate.

This sequence belongs to the ketol-acid reductoisomerase family. The cofactor is Mg(2+).

It carries out the reaction (2R)-2,3-dihydroxy-3-methylbutanoate + NADP(+) = (2S)-2-acetolactate + NADPH + H(+). The catalysed reaction is (2R,3R)-2,3-dihydroxy-3-methylpentanoate + NADP(+) = (S)-2-ethyl-2-hydroxy-3-oxobutanoate + NADPH + H(+). The protein operates within amino-acid biosynthesis; L-isoleucine biosynthesis; L-isoleucine from 2-oxobutanoate: step 2/4. It participates in amino-acid biosynthesis; L-valine biosynthesis; L-valine from pyruvate: step 2/4. Functionally, involved in the biosynthesis of branched-chain amino acids (BCAA). Catalyzes an alkyl-migration followed by a ketol-acid reduction of (S)-2-acetolactate (S2AL) to yield (R)-2,3-dihydroxy-isovalerate. In the isomerase reaction, S2AL is rearranged via a Mg-dependent methyl migration to produce 3-hydroxy-3-methyl-2-ketobutyrate (HMKB). In the reductase reaction, this 2-ketoacid undergoes a metal-dependent reduction by NADPH to yield (R)-2,3-dihydroxy-isovalerate. The sequence is that of Ketol-acid reductoisomerase (NADP(+)) from Rhizobium rhizogenes (strain K84 / ATCC BAA-868) (Agrobacterium radiobacter).